The chain runs to 384 residues: Prostaglandin E synthase 2 (384 aa).

At Met1–Arg56 the chain is on the lumenal side. The helical transmembrane segment at Leu57–His73 threads the bilayer. Residues Thr74–Asp384 lie on the Cytoplasmic side of the membrane. A Glutaredoxin domain is found at Ser89–Lys192. Residues Val147 and Asp163–Ser164 contribute to the glutathione site. The GST C-terminal domain maps to Tyr262–His376.

Belongs to the GST superfamily. As to quaternary structure, homodimer. Interacts with EXOSC10. May interact with CEBPB. Post-translationally, synthesized as a Golgi membrane-associated protein, and the proteolytic removal of the N-terminal hydrophobic domain leads to the formation of a mature cytosolic enzyme. In terms of tissue distribution, widely expressed. Expressed in brain, heart, liver, colon and lung.

The protein resides in the golgi apparatus membrane. The protein localises to the nucleus. It is found in the cytoplasm. It catalyses the reaction prostaglandin H2 = prostaglandin E2. It carries out the reaction prostaglandin H2 = (12S)-hydroxy-(5Z,8E,10E)-heptadecatrienoate + malonaldehyde. It participates in lipid metabolism; prostaglandin biosynthesis. Isomerase activity is increased by sulfhydril compounds. Dithiothreitol (DTT) is most effective, followed by glutathione (GSH) and 2-mercaptoethanol. In terms of biological role, isomerase that catalyzes the conversion of PGH2 into the more stable prostaglandin E2 (PGE2) (in vitro). The biological function and the GSH-dependent property of PTGES2 is still under debate. In vivo, PTGES2 could form a complex with GSH and heme and would not participate in PGE2 synthesis but would catalyze the degradation of prostaglandin E2 H2 (PGH2) to 12(S)-hydroxy-5(Z),8(E),10(E)-heptadecatrienoic acid (HHT) and malondialdehyde (MDA). May also have transactivation activity toward IFN-gamma (IFNG), possibly via an interaction with CEBPB; however, the relevance of transcription activation activity remains unclear. The protein is Prostaglandin E synthase 2 (Ptges2) of Mus musculus (Mouse).